The sequence spans 358 residues: Testis-specific serine/threonine-protein kinase 2 (358 aa).

The Protein kinase domain occupies 12 to 272 (YIVGINLGKG…IDEILSHSWL (261 aa)). Residues 18–26 (LGKGSYAKV) and lysine 41 contribute to the ATP site. The active-site Proton acceptor is the aspartate 136. Composition is skewed to basic and acidic residues over residues 296–315 (DCKL…DHKL) and 329–358 (NEDR…KAST). Residues 296–358 (DCKLDTRPGS…SGAEVEKAST (63 aa)) form a disordered region.

Belongs to the protein kinase superfamily. CAMK Ser/Thr protein kinase family. In terms of assembly, interacts with TSSK1B. Interacts with HSP90; this interaction stabilizes TSSK2. The cofactor is Mg(2+). Autophosphorylated. In terms of processing, ubiquitinated; HSP90 activity negatively regulates ubiquitination and degradation. As to expression, testis-specific. Expressed only in the spermatids postmeiotically at the final stages of cytodifferentiation in the seminiferous tubules (at protein level). Not detected in released sperms in the lumen of the seminiferous tubules. Also present in the epididymal sperm (at protein level).

The protein localises to the cytoplasm. It localises to the cytoskeleton. It is found in the microtubule organizing center. Its subcellular location is the centrosome. The protein resides in the centriole. The protein localises to the cytoplasmic vesicle. It localises to the secretory vesicle. It is found in the acrosome. It catalyses the reaction L-seryl-[protein] + ATP = O-phospho-L-seryl-[protein] + ADP + H(+). The catalysed reaction is L-threonyl-[protein] + ATP = O-phospho-L-threonyl-[protein] + ADP + H(+). Its activity is regulated as follows. Activated by phosphorylation on Thr-174, potentially by autophosphorylation. Its function is as follows. Testis-specific serine/threonine-protein kinase required during spermatid development. Phosphorylates 'Ser-281' of TSKS and SPAG16. Involved in the late stages of spermatogenesis, during the reconstruction of the cytoplasm. During spermatogenesis, required for the transformation of a ring-shaped structure around the base of the flagellum originating from the chromatoid body. The sequence is that of Testis-specific serine/threonine-protein kinase 2 (Tssk2) from Mus musculus (Mouse).